We begin with the raw amino-acid sequence, 260 residues long: Snake venom serine protease gussurobin (260 aa).

The first 18 residues, 1–18, serve as a signal peptide directing secretion; the sequence is MVLIRVLANLLILQLSYA. A propeptide spanning residues 19 to 24 is cleaved from the precursor; it reads QKSSEL. Positions 25-251 constitute a Peptidase S1 domain; that stretch reads IIGGDECNIN…YTEWIQSTIA (227 aa). 6 cysteine pairs are disulfide-bonded: Cys31–Cys165, Cys52–Cys68, Cys100–Cys258, Cys144–Cys212, Cys176–Cys191, and Cys202–Cys227. Catalysis depends on charge relay system residues His67 and Asp112. N-linked (GlcNAc...) asparagine glycosylation is found at Asn123 and Asn124. Ser206 (charge relay system) is an active-site residue.

The protein belongs to the peptidase S1 family. Snake venom subfamily. As to quaternary structure, monomer. In terms of tissue distribution, expressed by the venom gland.

It is found in the secreted. Its function is as follows. Snake venom serine protease that may act in the hemostasis system of the prey. The protein is Snake venom serine protease gussurobin of Gloydius ussuriensis (Ussuri mamushi).